A 310-amino-acid polypeptide reads, in one-letter code: Tagatose-6-phosphate kinase (310 aa).

It belongs to the carbohydrate kinase PfkB family. LacC subfamily.

The enzyme catalyses D-tagatofuranose 6-phosphate + ATP = D-tagatofuranose 1,6-bisphosphate + ADP + H(+). Its pathway is carbohydrate metabolism; D-tagatose 6-phosphate degradation; D-glyceraldehyde 3-phosphate and glycerone phosphate from D-tagatose 6-phosphate: step 1/2. The polypeptide is Tagatose-6-phosphate kinase (Streptococcus uberis (strain ATCC BAA-854 / 0140J)).